The following is a 50-amino-acid chain: MISMLRCTFFFVSVILITSYFVTPTMSIKCNRKRHVIKPHICRKICGKNG.

An N-terminal signal peptide occupies residues 1 to 27 (MISMLRCTFFFVSVILITSYFVTPTMS). Lysine 29 is subject to N6-formyllysine. Cysteines 30 and 42 form a disulfide. An N6-formyllysine mark is found at lysine 44 and lysine 48. Position 49 is an asparagine amide (asparagine 49).

In terms of tissue distribution, expressed by the venom gland.

The protein resides in the secreted. Potent anti-inflammatory agent. At low concentrations, mediates the degranulation of mast cells thus evoking an inflammatory response. Also acts as a neurotoxin capable of blocking a class of voltage-gated potassium channels. In Apis cerana cerana (Oriental honeybee), this protein is Mast cell degranulating peptide.